The chain runs to 105 residues: Small ribosomal subunit protein uS10 (105 aa).

The protein belongs to the universal ribosomal protein uS10 family. As to quaternary structure, part of the 30S ribosomal subunit.

Functionally, involved in the binding of tRNA to the ribosomes. This is Small ribosomal subunit protein uS10 from Acaryochloris marina (strain MBIC 11017).